The following is a 262-amino-acid chain: Ribosome-recycling factor, mitochondrial (262 aa).

A mitochondrion-targeting transit peptide spans 1–55 (MALGLKCFRMVHPTFRNYLAASIRPVSEVTLKTVHERQHGHRQYMAYSAVPVRHF).

This sequence belongs to the RRF family.

The protein resides in the mitochondrion. In terms of biological role, responsible for the disassembly of ribosomes from messenger RNA at the termination of mitochondrial protein biosynthesis. Acts in collaboration with GFM2. Promotes mitochondrial ribosome recycling by dissolution of intersubunit contacts. The sequence is that of Ribosome-recycling factor, mitochondrial from Homo sapiens (Human).